The chain runs to 323 residues: tRNA dimethylallyltransferase (323 aa).

Residue 12-19 participates in ATP binding; sequence GPTAAGKT. A substrate-binding site is contributed by 14–19; the sequence is TAAGKT. 2 interaction with substrate tRNA regions span residues 37 to 40 and 161 to 165; these read DSAL and QRLTR.

It belongs to the IPP transferase family. In terms of assembly, monomer. Mg(2+) serves as cofactor.

The enzyme catalyses adenosine(37) in tRNA + dimethylallyl diphosphate = N(6)-dimethylallyladenosine(37) in tRNA + diphosphate. Catalyzes the transfer of a dimethylallyl group onto the adenine at position 37 in tRNAs that read codons beginning with uridine, leading to the formation of N6-(dimethylallyl)adenosine (i(6)A). This chain is tRNA dimethylallyltransferase, found in Pseudomonas fluorescens (strain ATCC BAA-477 / NRRL B-23932 / Pf-5).